A 491-amino-acid chain; its full sequence is HEPACAM family member 2 (491 aa).

The signal sequence occupies residues 1–18 (MWLRVFTAFLSFTAGACS). N73, N117, and N153 each carry an N-linked (GlcNAc...) asparagine glycan. Ig-like C2-type domains lie at 137–221 (PVVQ…SDII) and 223–319 (PTIY…THFT). Intrachain disulfides connect C158/C207 and C258/C303. N308 carries an N-linked (GlcNAc...) asparagine glycan. Residues 340-360 (LASITGISLFLIISMCLLFLW) form a helical membrane-spanning segment. Over 361-491 (KKFQPYKVIK…GKHSRAKQCI (131 aa)) the chain is Cytoplasmic. A compositionally biased stretch (polar residues) spans 444–454 (QQQDHPESSSQ). 2 disordered regions span residues 444–466 (QQQD…DRHD) and 472–491 (ELGH…KQCI). Basic and acidic residues predominate over residues 472 to 482 (ELGHCKEQDKG).

Post-translationally, poly-ADP-ribosylated (PARsylated) by tankyrase TNKS during late G2 and prophase, leading to translocation to mitotic centrosomes. In terms of processing, N-glycosylated.

The protein localises to the golgi apparatus membrane. It localises to the cytoplasm. It is found in the cytoskeleton. The protein resides in the spindle. Its subcellular location is the microtubule organizing center. The protein localises to the centrosome. It localises to the midbody. Required during prometaphase for centrosome maturation. Following poly-ADP-ribosylation (PARsylation) by TNKS, translocates from the Golgi apparatus to mitotic centrosomes and plays a key role in the formation of robust microtubules for prompt movement of chromosomes: anchors AKAP9/CG-NAP, a scaffold protein of the gamma-tubulin ring complex and promotes centrosome maturation. In Bos taurus (Bovine), this protein is HEPACAM family member 2 (HEPACAM2).